Consider the following 405-residue polypeptide: Diaminohydroxyphosphoribosylamino-pyrimidine deaminase (405 aa).

Residues 256-383 (YNHEEYMLKA…DLLKKAGIVV (128 aa)) enclose the CMP/dCMP-type deaminase domain. His-305 provides a ligand contact to Zn(2+). The active-site Proton donor is the Glu-307. 2 residues coordinate Zn(2+): Cys-335 and Cys-345.

The protein belongs to the cytidine and deoxycytidylate deaminase family. Requires Zn(2+) as cofactor.

It localises to the cytoplasm. The protein localises to the nucleus. It catalyses the reaction 2,5-diamino-6-hydroxy-4-(5-phosphoribosylamino)-pyrimidine + H2O + H(+) = 5-amino-6-(5-phospho-D-ribosylamino)uracil + NH4(+). It functions in the pathway cofactor biosynthesis; riboflavin biosynthesis; 5-amino-6-(D-ribitylamino)uracil from GTP: step 2/4. Its function is as follows. Involved in riboflavin biosynthesis. Converts 2,5-diamino-6-(ribosylamino)-4(3H)-pyrimidinone 5'-phosphate into 5-amino-6-(ribosylamino)-2,4(1H,3H)-pyrimidinedione 5'-phosphate. The chain is Diaminohydroxyphosphoribosylamino-pyrimidine deaminase from Schizosaccharomyces pombe (strain 972 / ATCC 24843) (Fission yeast).